We begin with the raw amino-acid sequence, 791 residues long: Phenylalanine--tRNA ligase beta subunit (791 aa).

The tRNA-binding domain occupies Gly-39 to Lys-149. The region spanning Ile-403–Thr-478 is the B5 domain. 4 residues coordinate Mg(2+): Asp-456, Asp-462, Glu-465, and Glu-466. The FDX-ACB domain maps to Pro-698–Arg-791.

Belongs to the phenylalanyl-tRNA synthetase beta subunit family. Type 1 subfamily. As to quaternary structure, tetramer of two alpha and two beta subunits. It depends on Mg(2+) as a cofactor.

It is found in the cytoplasm. It carries out the reaction tRNA(Phe) + L-phenylalanine + ATP = L-phenylalanyl-tRNA(Phe) + AMP + diphosphate + H(+). This Clostridium tetani (strain Massachusetts / E88) protein is Phenylalanine--tRNA ligase beta subunit.